The chain runs to 1153 residues: Otoancorin (1153 aa).

An N-terminal signal peptide occupies residues 1–22 (MSQEPTTYSLFLFLFLSHGVSS). Asparagine 156 carries N-linked (GlcNAc...) asparagine glycosylation. A glycan (N-linked (GlcNAc...) (complex) asparagine) is linked at asparagine 211. N-linked (GlcNAc...) asparagine glycosylation is found at asparagine 244, asparagine 289, asparagine 321, asparagine 394, asparagine 398, asparagine 460, asparagine 544, asparagine 812, asparagine 911, and asparagine 974. The interval 1109–1128 (HSWQDAPASAGPTRTSSSRS) is disordered. Alanine 1130 carries the GPI-anchor amidated alanine lipid modification. A propeptide spans 1131–1153 (GALQSWGLWLGCPLLVLMAKLLW) (removed in mature form).

The protein belongs to the stereocilin family.

The protein localises to the apical cell membrane. The protein resides in the secreted. It localises to the extracellular space. It is found in the extracellular matrix. In terms of biological role, may act as an adhesion molecule. In Homo sapiens (Human), this protein is Otoancorin (OTOA).